The following is a 49-amino-acid chain: uncharacterized protein (49 aa).

Residues 31–48 (PDLYTIIVSYFSIFSLFF) form a helical membrane-spanning segment.

The protein localises to the membrane. This is an uncharacterized protein from Saccharomyces cerevisiae (strain ATCC 204508 / S288c) (Baker's yeast).